The sequence spans 51 residues: Large ribosomal subunit protein eL39 (51 aa).

This sequence belongs to the eukaryotic ribosomal protein eL39 family.

The protein is Large ribosomal subunit protein eL39 (rpl39e) of Methanocaldococcus jannaschii (strain ATCC 43067 / DSM 2661 / JAL-1 / JCM 10045 / NBRC 100440) (Methanococcus jannaschii).